Here is a 338-residue protein sequence, read N- to C-terminus: Very-long-chain 3-oxoacyl-CoA reductase (338 aa).

Residues 20 to 40 traverse the membrane as a helical segment; that stretch reads LSAFLLVMGSIGVGRVIYQTL. 8 residues coordinate NADP(+): valine 66, asparagine 95, aspartate 120, asparagine 147, tyrosine 214, lysine 218, valine 247, and serine 249. Catalysis depends on tyrosine 214, which acts as the Proton donor. Residue lysine 218 is the Lowers pKa of active site Tyr of the active site.

It belongs to the short-chain dehydrogenases/reductases (SDR) family.

It localises to the endoplasmic reticulum membrane. The catalysed reaction is a very-long-chain (3R)-3-hydroxyacyl-CoA + NADP(+) = a very-long-chain 3-oxoacyl-CoA + NADPH + H(+). The protein operates within lipid metabolism; fatty acid biosynthesis. Functionally, component of the microsomal membrane bound fatty acid elongation system, which produces the 26-carbon very long-chain fatty acids (VLCFA) from palmitate. Catalyzes the reduction of the 3-ketoacyl-CoA intermediate that is formed in each cycle of fatty acid elongation. VLCFAs serve as precursors for ceramide and sphingolipids. This is Very-long-chain 3-oxoacyl-CoA reductase from Laccaria bicolor (strain S238N-H82 / ATCC MYA-4686) (Bicoloured deceiver).